The chain runs to 488 residues: Serine hydroxymethyltransferase, mitochondrial (488 aa).

A mitochondrion-targeting transit peptide spans 1-20 (MAVLRQFVKNSYSSIPKRFY). Lys265 bears the N6-(pyridoxal phosphate)lysine mark.

The protein belongs to the SHMT family. In terms of assembly, homotetramer. The cofactor is pyridoxal 5'-phosphate.

The protein resides in the mitochondrion. The enzyme catalyses (6R)-5,10-methylene-5,6,7,8-tetrahydrofolate + glycine + H2O = (6S)-5,6,7,8-tetrahydrofolate + L-serine. It participates in one-carbon metabolism; tetrahydrofolate interconversion. Its function is as follows. Interconversion of serine and glycine. The sequence is that of Serine hydroxymethyltransferase, mitochondrial (shm2) from Schizosaccharomyces pombe (strain 972 / ATCC 24843) (Fission yeast).